Here is a 406-residue protein sequence, read N- to C-terminus: Phosphopentomutase (406 aa).

6 residues coordinate Mn(2+): aspartate 10, aspartate 305, histidine 310, aspartate 346, histidine 347, and histidine 358.

The protein belongs to the phosphopentomutase family. The cofactor is Mn(2+).

The protein resides in the cytoplasm. It carries out the reaction 2-deoxy-alpha-D-ribose 1-phosphate = 2-deoxy-D-ribose 5-phosphate. The enzyme catalyses alpha-D-ribose 1-phosphate = D-ribose 5-phosphate. Its pathway is carbohydrate degradation; 2-deoxy-D-ribose 1-phosphate degradation; D-glyceraldehyde 3-phosphate and acetaldehyde from 2-deoxy-alpha-D-ribose 1-phosphate: step 1/2. Functionally, isomerase that catalyzes the conversion of deoxy-ribose 1-phosphate (dRib-1-P) and ribose 1-phosphate (Rib-1-P) to deoxy-ribose 5-phosphate (dRib-5-P) and ribose 5-phosphate (Rib-5-P), respectively. The chain is Phosphopentomutase from Aliivibrio fischeri (strain MJ11) (Vibrio fischeri).